Reading from the N-terminus, the 181-residue chain is Der GTPase-activating protein YihI (181 aa).

Disordered regions lie at residues 1-75 and 145-181; these read MSRK…KKIP and EPEA…DYKG. The span at 32–43 shows a compositional bias: basic residues; the sequence is RLRKKDKKRKGL. Residues 146–155 are compositionally biased toward acidic residues; that stretch reads PEAEEEFEEE. The segment covering 156–165 has biased composition (basic and acidic residues); sequence APVRKSRSDD. The segment covering 166 to 181 has biased composition (acidic residues); sequence DLLADFEDFDMDDYKG.

It belongs to the YihI family. Interacts with Der.

Functionally, a GTPase-activating protein (GAP) that modifies Der/EngA GTPase function. May play a role in ribosome biogenesis. In Vibrio vulnificus (strain CMCP6), this protein is Der GTPase-activating protein YihI.